The primary structure comprises 162 residues: Probable E3 ubiquitin-protein ligase XERICO (162 aa).

Residues 12–28 (GMLCVILVNTALSISIV) form a helical membrane-spanning segment. The segment at 103-145 (CSVCLSKFQGDSEINKLKCGHLFHKTCLEKWIDYWNITCPLCR) adopts an RING-type; atypical zinc-finger fold.

As to quaternary structure, interacts with UBC8 and TULP9. In terms of tissue distribution, ubiquitous. Higher expression in actively growing tissues.

The protein localises to the membrane. The catalysed reaction is S-ubiquitinyl-[E2 ubiquitin-conjugating enzyme]-L-cysteine + [acceptor protein]-L-lysine = [E2 ubiquitin-conjugating enzyme]-L-cysteine + N(6)-ubiquitinyl-[acceptor protein]-L-lysine.. Its pathway is protein modification; protein ubiquitination. Functionally, function on abscisic acid homeostasis at post-translational level, probably through ubiquitin/proteasome-dependent substrate-specific degradation. The protein is Probable E3 ubiquitin-protein ligase XERICO (XERICO) of Arabidopsis thaliana (Mouse-ear cress).